We begin with the raw amino-acid sequence, 180 residues long: Acireductone dioxygenase (180 aa).

Fe(2+) is bound by residues His-97, His-99, Glu-103, and His-141. Residues His-97, His-99, Glu-103, and His-141 each coordinate Ni(2+).

Belongs to the acireductone dioxygenase (ARD) family. In terms of assembly, monomer. Fe(2+) is required as a cofactor. Ni(2+) serves as cofactor.

The catalysed reaction is 1,2-dihydroxy-5-(methylsulfanyl)pent-1-en-3-one + O2 = 3-(methylsulfanyl)propanoate + CO + formate + 2 H(+). It catalyses the reaction 1,2-dihydroxy-5-(methylsulfanyl)pent-1-en-3-one + O2 = 4-methylsulfanyl-2-oxobutanoate + formate + 2 H(+). It functions in the pathway amino-acid biosynthesis; L-methionine biosynthesis via salvage pathway; L-methionine from S-methyl-5-thio-alpha-D-ribose 1-phosphate: step 5/6. Catalyzes 2 different reactions between oxygen and the acireductone 1,2-dihydroxy-3-keto-5-methylthiopentene (DHK-MTPene) depending upon the metal bound in the active site. Fe-containing acireductone dioxygenase (Fe-ARD) produces formate and 2-keto-4-methylthiobutyrate (KMTB), the alpha-ketoacid precursor of methionine in the methionine recycle pathway. Ni-containing acireductone dioxygenase (Ni-ARD) produces methylthiopropionate, carbon monoxide and formate, and does not lie on the methionine recycle pathway. This chain is Acireductone dioxygenase, found in Cronobacter sakazakii (strain ATCC BAA-894) (Enterobacter sakazakii).